The primary structure comprises 59 residues: Small ribosomal subunit protein bS21A (59 aa).

It belongs to the bacterial ribosomal protein bS21 family.

In Gloeobacter violaceus (strain ATCC 29082 / PCC 7421), this protein is Small ribosomal subunit protein bS21A.